A 77-amino-acid polypeptide reads, in one-letter code: uncharacterized protein (77 aa).

Composition is skewed to basic and acidic residues over residues 1–24 (CPVA…EDQR) and 37–58 (EGPK…ERGP). Residues 1–77 (CPVAEEHFLV…RHGPKRKPAK (77 aa)) form a disordered region. Over residues 66–77 (RPRHGPKRKPAK) the composition is skewed to basic residues.

This is an uncharacterized protein from Macaca fascicularis (Crab-eating macaque).